The chain runs to 382 residues: GDSL esterase/lipase At4g01130 (382 aa).

The signal sequence occupies residues 1 to 28 (MASDINRRRSFSLLVLIIVMLYGHKGDS). Catalysis depends on S41, which acts as the Nucleophile. N118, N263, N275, and N330 each carry an N-linked (GlcNAc...) asparagine glycan. Catalysis depends on residues D348 and H351.

Belongs to the 'GDSL' lipolytic enzyme family.

The protein localises to the secreted. This chain is GDSL esterase/lipase At4g01130, found in Arabidopsis thaliana (Mouse-ear cress).